Reading from the N-terminus, the 354-residue chain is Cysteine proteinase 1 (354 aa).

The signal sequence occupies residues 1-24 (MARRNPLLFAIVVTILFVVCYGSA). Positions 25–125 (LIAQTPPPVD…HKEDVHVDDS (101 aa)) are cleaved as a propeptide — activation peptide. Disulfide bonds link cysteine 150–cysteine 191, cysteine 184–cysteine 229, and cysteine 282–cysteine 330. The active site involves cysteine 153. An N-linked (GlcNAc...) asparagine glycan is attached at asparagine 208. Active-site residues include histidine 289 and asparagine 309.

It belongs to the peptidase C1 family.

In terms of biological role, the cysteine proteinases have a potential role in host-parasite interaction and virulence. This chain is Cysteine proteinase 1 (CYS1), found in Leishmania pifanoi.